The sequence spans 336 residues: 3-isopropylmalate dehydrogenase (336 aa).

Residues R87, R97, R121, and D211 each coordinate substrate. Positions 211, 235, and 239 each coordinate Mg(2+). An NAD(+)-binding site is contributed by 271–283 (GSAPDIAGQGIAD).

The protein belongs to the isocitrate and isopropylmalate dehydrogenases family. LeuB type 2 subfamily. Homodimer. Mg(2+) serves as cofactor. Requires Mn(2+) as cofactor.

It is found in the cytoplasm. The catalysed reaction is (2R,3S)-3-isopropylmalate + NAD(+) = 4-methyl-2-oxopentanoate + CO2 + NADH. It participates in amino-acid biosynthesis; L-leucine biosynthesis; L-leucine from 3-methyl-2-oxobutanoate: step 3/4. Functionally, catalyzes the oxidation of 3-carboxy-2-hydroxy-4-methylpentanoate (3-isopropylmalate) to 3-carboxy-4-methyl-2-oxopentanoate. The product decarboxylates to 4-methyl-2 oxopentanoate. This Mycolicibacterium vanbaalenii (strain DSM 7251 / JCM 13017 / BCRC 16820 / KCTC 9966 / NRRL B-24157 / PYR-1) (Mycobacterium vanbaalenii) protein is 3-isopropylmalate dehydrogenase.